We begin with the raw amino-acid sequence, 195 residues long: uncharacterized protein (195 aa).

Residues Met1–Glu35 form a disordered region. The span at Gly20 to Gln30 shows a compositional bias: low complexity. In terms of domain architecture, MSP spans Gly76–Ala184.

This is an uncharacterized protein from Caenorhabditis elegans.